We begin with the raw amino-acid sequence, 1058 residues long: Carbamoyl phosphate synthase large chain (1058 aa).

Positions 1–401 (MPKRKDIKTI…SLLKAIRSLE (401 aa)) are carboxyphosphate synthetic domain. Arginine 129, arginine 169, glycine 175, glycine 176, lysine 208, isoleucine 210, glutamate 215, glycine 241, isoleucine 242, histidine 243, glutamine 284, and glutamate 298 together coordinate ATP. In terms of domain architecture, ATP-grasp 1 spans 133–327 (RDLMNELNEP…IAKIAAKIAV (195 aa)). 3 residues coordinate Mg(2+): glutamine 284, glutamate 298, and asparagine 300. Mn(2+)-binding residues include glutamine 284, glutamate 298, and asparagine 300. Residues 402–546 (YGVHHLGLPN…YSTYEFENES (145 aa)) form an oligomerization domain region. Residues 547–929 (TRSDKEKIVV…ALYKGLTAAG (383 aa)) form a carbamoyl phosphate synthetic domain region. The ATP-grasp 2 domain maps to 671-861 (EKLLIGLKIP…VANIAMQCIL (191 aa)). ATP-binding residues include arginine 707, arginine 746, leucine 748, glutamate 752, glycine 777, valine 778, histidine 779, serine 780, glutamine 820, and glutamate 832. Positions 820, 832, and 834 each coordinate Mg(2+). Glutamine 820, glutamate 832, and asparagine 834 together coordinate Mn(2+). The MGS-like domain occupies 930–1058 (IKIKDYGRVL…ESMSFRVQTL (129 aa)). The segment at 930–1058 (IKIKDYGRVL…ESMSFRVQTL (129 aa)) is allosteric domain.

This sequence belongs to the CarB family. Composed of two chains; the small (or glutamine) chain promotes the hydrolysis of glutamine to ammonia, which is used by the large (or ammonia) chain to synthesize carbamoyl phosphate. Tetramer of heterodimers (alpha,beta)4. Mg(2+) serves as cofactor. The cofactor is Mn(2+).

It catalyses the reaction hydrogencarbonate + L-glutamine + 2 ATP + H2O = carbamoyl phosphate + L-glutamate + 2 ADP + phosphate + 2 H(+). The enzyme catalyses hydrogencarbonate + NH4(+) + 2 ATP = carbamoyl phosphate + 2 ADP + phosphate + 2 H(+). It participates in amino-acid biosynthesis; L-arginine biosynthesis; carbamoyl phosphate from bicarbonate: step 1/1. Its pathway is pyrimidine metabolism; UMP biosynthesis via de novo pathway; (S)-dihydroorotate from bicarbonate: step 1/3. Large subunit of the glutamine-dependent carbamoyl phosphate synthetase (CPSase). CPSase catalyzes the formation of carbamoyl phosphate from the ammonia moiety of glutamine, carbonate, and phosphate donated by ATP, constituting the first step of 2 biosynthetic pathways, one leading to arginine and/or urea and the other to pyrimidine nucleotides. The large subunit (synthetase) binds the substrates ammonia (free or transferred from glutamine from the small subunit), hydrogencarbonate and ATP and carries out an ATP-coupled ligase reaction, activating hydrogencarbonate by forming carboxy phosphate which reacts with ammonia to form carbamoyl phosphate. The polypeptide is Carbamoyl phosphate synthase large chain (Fusobacterium nucleatum subsp. nucleatum (strain ATCC 25586 / DSM 15643 / BCRC 10681 / CIP 101130 / JCM 8532 / KCTC 2640 / LMG 13131 / VPI 4355)).